Here is an 89-residue protein sequence, read N- to C-terminus: Small ribosomal subunit protein bS20 (89 aa).

The span at 1-11 (MANHKSAEKRN) shows a compositional bias: basic and acidic residues. The segment at 1 to 30 (MANHKSAEKRNRQNQVARLRNKSTRTAMKN) is disordered.

This sequence belongs to the bacterial ribosomal protein bS20 family.

Functionally, binds directly to 16S ribosomal RNA. The polypeptide is Small ribosomal subunit protein bS20 (Desulfotalea psychrophila (strain LSv54 / DSM 12343)).